Here is a 217-residue protein sequence, read N- to C-terminus: Pyridoxine/pyridoxamine 5'-phosphate oxidase (217 aa).

FMN contacts are provided by residues 66 to 71, 81 to 82, Arg87, Lys88, and Gln110; these read RMVLLK and FT. Residue Lys71 participates in substrate binding. Tyr128, Arg132, and Ser136 together coordinate substrate. FMN is bound by residues 145–146 and Trp190; that span reads QS. 196–198 provides a ligand contact to substrate; it reads RLH. Arg200 lines the FMN pocket.

Belongs to the pyridoxamine 5'-phosphate oxidase family. In terms of assembly, homodimer. The cofactor is FMN.

It carries out the reaction pyridoxamine 5'-phosphate + O2 + H2O = pyridoxal 5'-phosphate + H2O2 + NH4(+). The catalysed reaction is pyridoxine 5'-phosphate + O2 = pyridoxal 5'-phosphate + H2O2. The protein operates within cofactor metabolism; pyridoxal 5'-phosphate salvage; pyridoxal 5'-phosphate from pyridoxamine 5'-phosphate: step 1/1. It functions in the pathway cofactor metabolism; pyridoxal 5'-phosphate salvage; pyridoxal 5'-phosphate from pyridoxine 5'-phosphate: step 1/1. In terms of biological role, catalyzes the oxidation of either pyridoxine 5'-phosphate (PNP) or pyridoxamine 5'-phosphate (PMP) into pyridoxal 5'-phosphate (PLP). The chain is Pyridoxine/pyridoxamine 5'-phosphate oxidase from Psychromonas ingrahamii (strain DSM 17664 / CCUG 51855 / 37).